The chain runs to 256 residues: Triosephosphate isomerase (256 aa).

Asn12–Lys14 lines the substrate pocket. Residue His99 is the Electrophile of the active site. The active-site Proton acceptor is Glu169. Substrate contacts are provided by residues Gly175, Ser214, and Gly235–Gly236.

It belongs to the triosephosphate isomerase family. Homodimer.

The protein localises to the cytoplasm. It carries out the reaction D-glyceraldehyde 3-phosphate = dihydroxyacetone phosphate. Its pathway is carbohydrate biosynthesis; gluconeogenesis. The protein operates within carbohydrate degradation; glycolysis; D-glyceraldehyde 3-phosphate from glycerone phosphate: step 1/1. Involved in the gluconeogenesis. Catalyzes stereospecifically the conversion of dihydroxyacetone phosphate (DHAP) to D-glyceraldehyde-3-phosphate (G3P). This is Triosephosphate isomerase from Rhizobium etli (strain ATCC 51251 / DSM 11541 / JCM 21823 / NBRC 15573 / CFN 42).